We begin with the raw amino-acid sequence, 338 residues long: Auxin-responsive protein IAA9 (338 aa).

Positions 1 to 25 are disordered; sequence MSPEEELQSNVSVASSSPTSNCISR. The segment covering 9–21 has biased composition (low complexity); that stretch reads SNVSVASSSPTSN. An EAR-like (transcriptional repression) motif is present at residues 68–72; it reads LTLGL. Residues 150-186 form a disordered region; that stretch reads ATQSVTKKDVPQNIPKGQSSTTNNSSSPPAAKAQIVG. Low complexity predominate over residues 168 to 180; sequence SSTTNNSSSPPAA. One can recognise a PB1 domain in the interval 216–318; the sequence is ALFVKVSMDG…VCKKLKIMKG (103 aa).

Belongs to the Aux/IAA family. In terms of assembly, homodimers and heterodimers. Interacts with TPL. Post-translationally, phosphorylated by phytochrome A in vitro. As to expression, highly expressed in the whole plant.

Its subcellular location is the nucleus. Aux/IAA proteins are short-lived transcriptional factors that function as repressors of early auxin response genes at low auxin concentrations. Repression is thought to result from the interaction with auxin response factors (ARFs), proteins that bind to the auxin-responsive promoter element (AuxRE). Formation of heterodimers with ARF proteins may alter their ability to modulate early auxin response genes expression. The polypeptide is Auxin-responsive protein IAA9 (IAA9) (Arabidopsis thaliana (Mouse-ear cress)).